A 379-amino-acid chain; its full sequence is 3-dehydroquinate synthase (379 aa).

The protein belongs to the archaeal-type DHQ synthase family.

It carries out the reaction 2-amino-2,3,7-trideoxy-D-lyxo-hept-6-ulosonate + NAD(+) + H2O = 3-dehydroquinate + NH4(+) + NADH + H(+). Functionally, catalyzes the oxidative deamination and cyclization of 2-amino-3,7-dideoxy-D-threo-hept-6-ulosonic acid (ADH) to yield 3-dehydroquinate (DHQ), which is fed into the canonical shikimic pathway of aromatic amino acid biosynthesis. This chain is 3-dehydroquinate synthase, found in Methanococcoides burtonii (strain DSM 6242 / NBRC 107633 / OCM 468 / ACE-M).